The following is a 1192-amino-acid chain: Probable ATP-dependent RNA helicase kurz (1192 aa).

The interval glutamate 170–serine 214 is disordered. The span at valine 183–alanine 200 shows a compositional bias: acidic residues. A Helicase ATP-binding domain is found at methionine 270–leucine 436. Glycine 283 to threonine 290 is an ATP binding site. The DEAH box motif lies at aspartate 379 to histidine 382. Residues alanine 504–serine 529 are disordered. Positions proline 505–glutamate 517 are enriched in basic and acidic residues. The residue at position 529 (serine 529) is a Phosphoserine. Position 530 is a phosphothreonine (threonine 530). Residues aspartate 540–glycine 746 form the Helicase C-terminal domain. Residues aspartate 567–glutamine 583 show a composition bias toward basic and acidic residues. The tract at residues aspartate 567 to glycine 612 is disordered. Residues proline 584–serine 607 show a composition bias toward acidic residues.

It belongs to the DEAD box helicase family. DEAH subfamily.

It carries out the reaction ATP + H2O = ADP + phosphate + H(+). In Drosophila melanogaster (Fruit fly), this protein is Probable ATP-dependent RNA helicase kurz (kz).